A 213-amino-acid chain; its full sequence is MDNEYKNIDNKLKKEIGKFLTYNYSKNNNVVAIKYLGYVRLLNMNNSIRDLCMESSSKNMNDYNTFNNYVYNKIEELIYFMLDKYKKTEIESAGLRIIQIDKLCEELSLDAKKIVLDNLGIFDENFNYKKENSTAKLKFYLLFLLINHNKSCDKIALFNKMNNILKNFNPQYNVHSDPNVISFCDPNVISFCDTLVYNKLIDNKNLVALIKML.

This is an uncharacterized protein from Acanthamoeba polyphaga (Amoeba).